A 268-amino-acid polypeptide reads, in one-letter code: 4-hydroxy-tetrahydrodipicolinate reductase (268 aa).

7–12 (GANGRM) provides a ligand contact to NAD(+). Arginine 34 is a binding site for NADP(+). NAD(+) is bound by residues 97–99 (GTT) and 121–124 (SENM). The active-site Proton donor/acceptor is the histidine 155. Residue histidine 156 participates in (S)-2,3,4,5-tetrahydrodipicolinate binding. Lysine 159 acts as the Proton donor in catalysis. Position 165 to 166 (165 to 166 (GT)) interacts with (S)-2,3,4,5-tetrahydrodipicolinate.

It belongs to the DapB family.

It is found in the cytoplasm. The catalysed reaction is (S)-2,3,4,5-tetrahydrodipicolinate + NAD(+) + H2O = (2S,4S)-4-hydroxy-2,3,4,5-tetrahydrodipicolinate + NADH + H(+). The enzyme catalyses (S)-2,3,4,5-tetrahydrodipicolinate + NADP(+) + H2O = (2S,4S)-4-hydroxy-2,3,4,5-tetrahydrodipicolinate + NADPH + H(+). Its pathway is amino-acid biosynthesis; L-lysine biosynthesis via DAP pathway; (S)-tetrahydrodipicolinate from L-aspartate: step 4/4. In terms of biological role, catalyzes the conversion of 4-hydroxy-tetrahydrodipicolinate (HTPA) to tetrahydrodipicolinate. This Bartonella bacilliformis (strain ATCC 35685 / KC583 / Herrer 020/F12,63) protein is 4-hydroxy-tetrahydrodipicolinate reductase.